Here is a 78-residue protein sequence, read N- to C-terminus: Large ribosomal subunit protein bL28 (78 aa).

Residues 1–25 (MSRVCQVTGKRPTVGNNRSHAKNAT) are disordered.

This sequence belongs to the bacterial ribosomal protein bL28 family.

The sequence is that of Large ribosomal subunit protein bL28 from Tolumonas auensis (strain DSM 9187 / NBRC 110442 / TA 4).